Reading from the N-terminus, the 316-residue chain is D-alanine--D-alanine ligase (316 aa).

The ATP-grasp domain maps to 104–303 (KRVWLQHGLP…YADLCVAILA (200 aa)). Residue 130–185 (PDRLGLPLILKPPHEGSTVGITKVAGYSDMKAAYELAARFDAEVLAEQFITGRELT) coordinates ATP. Residues aspartate 257, glutamate 270, and asparagine 272 each contribute to the Mg(2+) site.

Belongs to the D-alanine--D-alanine ligase family. Mg(2+) serves as cofactor. Requires Mn(2+) as cofactor.

The protein resides in the cytoplasm. The enzyme catalyses 2 D-alanine + ATP = D-alanyl-D-alanine + ADP + phosphate + H(+). It participates in cell wall biogenesis; peptidoglycan biosynthesis. Cell wall formation. In Bordetella parapertussis (strain 12822 / ATCC BAA-587 / NCTC 13253), this protein is D-alanine--D-alanine ligase.